The primary structure comprises 143 residues: Transcriptional regulator MraZ (143 aa).

SpoVT-AbrB domains follow at residues 5-47 and 76-119; these read EYLH…PLDE and ATEC…SQAL.

The protein belongs to the MraZ family. Forms oligomers.

It is found in the cytoplasm. Its subcellular location is the nucleoid. This Desulfitobacterium hafniense (strain DSM 10664 / DCB-2) protein is Transcriptional regulator MraZ.